A 157-amino-acid polypeptide reads, in one-letter code: uncharacterized protein (157 aa).

The region spanning 3–157 is the N-acetyltransferase domain; sequence FTLEDMTEEE…TNIRMRKQLC (155 aa).

This sequence belongs to the acetyltransferase family.

This is an uncharacterized protein from Bacillus subtilis (strain 168).